The chain runs to 615 residues: Membrane protein insertase YidC (615 aa).

The next 5 helical transmembrane spans lie at 9–29, 384–404, 458–478, 516–536, and 556–576; these read LMFIVSAFAILIGYQFFVLGP, LVGNFGLAILLLTVVLKLVLY, LPMLIQIPVFYALYKVLTVTI, LIGAMIAHLGVWPLLYGFTMW, and WFPVIFTFTLSGFAVGLVIYW.

This sequence belongs to the OXA1/ALB3/YidC family. Type 1 subfamily. As to quaternary structure, interacts with the Sec translocase complex via SecD. Specifically interacts with transmembrane segments of nascent integral membrane proteins during membrane integration.

It is found in the cell inner membrane. Functionally, required for the insertion and/or proper folding and/or complex formation of integral membrane proteins into the membrane. Involved in integration of membrane proteins that insert both dependently and independently of the Sec translocase complex, as well as at least some lipoproteins. Aids folding of multispanning membrane proteins. This chain is Membrane protein insertase YidC, found in Caulobacter vibrioides (strain ATCC 19089 / CIP 103742 / CB 15) (Caulobacter crescentus).